The primary structure comprises 317 residues: MSAKNGSIKLVAGNSNPALAQAIAQGLHLPLTKAVVRRFADMEIFVEIQENVRGSDAFIIQSTSFPANDHLMELLIITDALRRSSARRITAVLPYFGYARQDRKSGSRTPISAKLVANLITQAGVDRVMTLDLHAGQIQGFFDIPTDNLYAAPLMVRDIKDKFDLSKTMVISPDVGGVARARGLAKRINTPLAIVDKRRERPGESEVMNVIGDVAGYTCILVDDIVDSGGTLVNAADALIAKGAKDVYAYITHGVLSGGAAARITNSKLKELVITDSILPTDAVSKAPNIRTLPIASLISDAIARTAAEESVSSLFD.

Residues 41–43 (DME) and 100–101 (RQ) contribute to the ATP site. Histidine 134 and aspartate 174 together coordinate Mg(2+). The active site involves lysine 197. Residues arginine 199, aspartate 223, and 227-231 (DSGGT) each bind D-ribose 5-phosphate.

Belongs to the ribose-phosphate pyrophosphokinase family. Class I subfamily. Homohexamer. Mg(2+) is required as a cofactor.

The protein resides in the cytoplasm. It catalyses the reaction D-ribose 5-phosphate + ATP = 5-phospho-alpha-D-ribose 1-diphosphate + AMP + H(+). It participates in metabolic intermediate biosynthesis; 5-phospho-alpha-D-ribose 1-diphosphate biosynthesis; 5-phospho-alpha-D-ribose 1-diphosphate from D-ribose 5-phosphate (route I): step 1/1. In terms of biological role, involved in the biosynthesis of the central metabolite phospho-alpha-D-ribosyl-1-pyrophosphate (PRPP) via the transfer of pyrophosphoryl group from ATP to 1-hydroxyl of ribose-5-phosphate (Rib-5-P). The polypeptide is Ribose-phosphate pyrophosphokinase (Bradyrhizobium diazoefficiens (strain JCM 10833 / BCRC 13528 / IAM 13628 / NBRC 14792 / USDA 110)).